A 396-amino-acid chain; its full sequence is Elongation factor Tu (396 aa).

The tr-type G domain maps to 10–206 (KPHCNIGTIG…NVDEYIPQPE (197 aa)). The interval 19–26 (GHVDHGKT) is G1. A GTP-binding site is contributed by 19–26 (GHVDHGKT). Mg(2+) is bound at residue Thr-26. Residues 60–64 (GITIS) are G2. Residues 81–84 (DCPG) are G3. Residues 81–85 (DCPGH) and 136–139 (NKCD) contribute to the GTP site. Residues 136–139 (NKCD) form a G4 region. Residues 174 to 176 (SAL) are G5.

Belongs to the TRAFAC class translation factor GTPase superfamily. Classic translation factor GTPase family. EF-Tu/EF-1A subfamily. In terms of assembly, monomer.

Its subcellular location is the cytoplasm. The catalysed reaction is GTP + H2O = GDP + phosphate + H(+). Functionally, GTP hydrolase that promotes the GTP-dependent binding of aminoacyl-tRNA to the A-site of ribosomes during protein biosynthesis. This is Elongation factor Tu from Afipia carboxidovorans (strain ATCC 49405 / DSM 1227 / KCTC 32145 / OM5) (Oligotropha carboxidovorans).